Reading from the N-terminus, the 87-residue chain is Large ribosomal subunit protein bL27 (87 aa).

The segment at 1 to 20 (MAHKKAGGSSRNGRDSESKR) is disordered.

Belongs to the bacterial ribosomal protein bL27 family.

This Thiobacillus denitrificans (strain ATCC 25259 / T1) protein is Large ribosomal subunit protein bL27.